Here is a 189-residue protein sequence, read N- to C-terminus: Thymidine kinase (189 aa).

Residues 9 to 16 (GTMNSGKT) and 85 to 88 (DESQ) contribute to the ATP site. Glu86 serves as the catalytic Proton acceptor. Zn(2+) is bound by residues Cys143, Cys146, Cys180, and His183.

This sequence belongs to the thymidine kinase family. Homotetramer.

It is found in the cytoplasm. The catalysed reaction is thymidine + ATP = dTMP + ADP + H(+). The protein is Thymidine kinase of Streptococcus pyogenes serotype M18 (strain MGAS8232).